Reading from the N-terminus, the 699-residue chain is Elongation factor G (699 aa).

The tr-type G domain maps to 8–283 (EHIRNIGICA…AVVDFLPSPI (276 aa)). Residues 17 to 24 (AHIDAGKT), 81 to 85 (DTPGH), and 135 to 138 (NKMD) each bind GTP.

This sequence belongs to the TRAFAC class translation factor GTPase superfamily. Classic translation factor GTPase family. EF-G/EF-2 subfamily.

Its subcellular location is the cytoplasm. Catalyzes the GTP-dependent ribosomal translocation step during translation elongation. During this step, the ribosome changes from the pre-translocational (PRE) to the post-translocational (POST) state as the newly formed A-site-bound peptidyl-tRNA and P-site-bound deacylated tRNA move to the P and E sites, respectively. Catalyzes the coordinated movement of the two tRNA molecules, the mRNA and conformational changes in the ribosome. This chain is Elongation factor G, found in Rickettsia rickettsii.